The primary structure comprises 140 residues: ATP synthase epsilon chain (140 aa).

The protein belongs to the ATPase epsilon chain family. In terms of assembly, F-type ATPases have 2 components, CF(1) - the catalytic core - and CF(0) - the membrane proton channel. CF(1) has five subunits: alpha(3), beta(3), gamma(1), delta(1), epsilon(1). CF(0) has three main subunits: a, b and c.

It localises to the cell inner membrane. In terms of biological role, produces ATP from ADP in the presence of a proton gradient across the membrane. In Legionella pneumophila (strain Lens), this protein is ATP synthase epsilon chain.